Reading from the N-terminus, the 237-residue chain is LexA repressor (237 aa).

Positions 26-46 (FDEMKEALDLRSKSGIHRLIT) form a DNA-binding region, H-T-H motif. Residues 84–110 (GFSPSVIEGGAQPKPSSRDLAPARSSG) form a disordered region. Catalysis depends on for autocatalytic cleavage activity residues serine 158 and lysine 196.

It belongs to the peptidase S24 family. In terms of assembly, homodimer.

It carries out the reaction Hydrolysis of Ala-|-Gly bond in repressor LexA.. In terms of biological role, represses a number of genes involved in the response to DNA damage (SOS response), including recA and lexA. In the presence of single-stranded DNA, RecA interacts with LexA causing an autocatalytic cleavage which disrupts the DNA-binding part of LexA, leading to derepression of the SOS regulon and eventually DNA repair. The polypeptide is LexA repressor (Parvibaculum lavamentivorans (strain DS-1 / DSM 13023 / NCIMB 13966)).